The primary structure comprises 532 residues: Flavin-containing monooxygenase 3 (532 aa).

Residues 9–13, Glu-32, 40–41, and 61–62 contribute to the FAD site; these read GAGVS, LW, and NS. Residues 60–61 and 195–198 contribute to the NADP(+) site; these read SN and SGCD. Ser-401 carries the post-translational modification Phosphoserine. Residues 510 to 530 form a helical membrane-spanning segment; the sequence is FFFHWLKLFAIPILLIAVFLV.

It belongs to the FMO family. FAD is required as a cofactor. In terms of tissue distribution, liver.

It is found in the microsome membrane. The protein resides in the endoplasmic reticulum membrane. It catalyses the reaction trimethylamine + NADPH + O2 = trimethylamine N-oxide + NADP(+) + H2O. It carries out the reaction N,N-dimethylaniline + NADPH + O2 + H(+) = N,N-dimethylaniline N-oxide + NADP(+) + H2O. The catalysed reaction is hypotaurine + NADPH + O2 + H(+) = taurine + NADP(+) + H2O. The enzyme catalyses (S)-nicotine + NADPH + O2 = trans-(S)-nicotine N(1')-oxide + NADP(+) + H2O. It catalyses the reaction albendazole + NADPH + O2 + H(+) = albendazole S-oxide + NADP(+) + H2O. Its function is as follows. Essential hepatic enzyme that catalyzes the oxygenation of a wide variety of nitrogen- and sulfur-containing compounds including drugs as well as dietary compounds. Plays an important role in the metabolism of trimethylamine (TMA), via the production of trimethylamine N-oxide (TMAO) metabolite. TMA is generated by the action of gut microbiota using dietary precursors such as choline, choline containing compounds, betaine or L-carnitine. By regulating TMAO concentration, FMO3 directly impacts both platelet responsiveness and rate of thrombus formation. This is Flavin-containing monooxygenase 3 (FMO3) from Homo sapiens (Human).